The primary structure comprises 278 residues: tRNA pseudouridine synthase A (278 aa).

Asp61 serves as the catalytic Nucleophile. Position 119 (Tyr119) interacts with substrate.

The protein belongs to the tRNA pseudouridine synthase TruA family. As to quaternary structure, homodimer.

The enzyme catalyses uridine(38/39/40) in tRNA = pseudouridine(38/39/40) in tRNA. Formation of pseudouridine at positions 38, 39 and 40 in the anticodon stem and loop of transfer RNAs. This chain is tRNA pseudouridine synthase A, found in Oleidesulfovibrio alaskensis (strain ATCC BAA-1058 / DSM 17464 / G20) (Desulfovibrio alaskensis).